The sequence spans 362 residues: Histidinol-phosphate aminotransferase (362 aa).

Lys-218 bears the N6-(pyridoxal phosphate)lysine mark.

It belongs to the class-II pyridoxal-phosphate-dependent aminotransferase family. Histidinol-phosphate aminotransferase subfamily. As to quaternary structure, homodimer. Requires pyridoxal 5'-phosphate as cofactor.

It catalyses the reaction L-histidinol phosphate + 2-oxoglutarate = 3-(imidazol-4-yl)-2-oxopropyl phosphate + L-glutamate. It participates in amino-acid biosynthesis; L-histidine biosynthesis; L-histidine from 5-phospho-alpha-D-ribose 1-diphosphate: step 7/9. This Xanthomonas campestris pv. campestris (strain 8004) protein is Histidinol-phosphate aminotransferase.